Here is a 142-residue protein sequence, read N- to C-terminus: Ribosome-binding factor A (142 aa).

The tract at residues 118-142 (DEAKQQEHGTVENAKQDGDKAEDDK) is disordered.

It belongs to the RbfA family. Monomer. Binds 30S ribosomal subunits, but not 50S ribosomal subunits or 70S ribosomes.

Its subcellular location is the cytoplasm. Its function is as follows. One of several proteins that assist in the late maturation steps of the functional core of the 30S ribosomal subunit. Associates with free 30S ribosomal subunits (but not with 30S subunits that are part of 70S ribosomes or polysomes). Required for efficient processing of 16S rRNA. May interact with the 5'-terminal helix region of 16S rRNA. This Shewanella piezotolerans (strain WP3 / JCM 13877) protein is Ribosome-binding factor A.